The sequence spans 1381 residues: Hepatocyte growth factor receptor (1381 aa).

Positions 1–24 (MKAPTVLAPGILVLLFTLVQKSNG) are cleaved as a signal peptide. Residues 25-933 (ECREALAKSE…VIVQSDQSFT (909 aa)) lie on the Extracellular side of the membrane. A Sema domain is found at 27 to 516 (REALAKSEMN…TGKKITRIPL (490 aa)). N-linked (GlcNAc...) asparagine glycans are attached at residues Asn45, Asn100, and Asn106. Intrachain disulfides connect Cys95–Cys101, Cys98–Cys160, Cys133–Cys141, and Cys173–Cys176. Asn203 and Asn359 each carry an N-linked (GlcNAc...) asparagine glycan. Intrachain disulfides connect Cys299/Cys364 and Cys386/Cys398. Residues Asn400 and Asn406 are each glycosylated (N-linked (GlcNAc...) asparagine). Cystine bridges form between Cys521-Cys539, Cys527-Cys562, Cys530-Cys546, and Cys542-Cys552. An N-linked (GlcNAc...) asparagine glycan is attached at Asn554. 3 consecutive IPT/TIG domains span residues 564 to 656 (PTVY…FSYV), 658 to 740 (PIIT…FSYR), and 743 to 837 (PIVY…LIYV). Residue Thr583 is glycosylated (O-linked (Man) threonine). Asn608 and Asn636 each carry an N-linked (GlcNAc...) asparagine glycan. 2 O-linked (Man) threonine glycosylation sites follow: Thr677 and Thr762. Residues Asn786 and Asn880 are each glycosylated (N-linked (GlcNAc...) asparagine). Residues 934–956 (GVIVGVVAISIILLLLLGLFLWL) traverse the membrane as a helical segment. Residues 957 to 1381 (KKKKQIKDLG…QDDLDGEVDT (425 aa)) are Cytoplasmic-facing. Ser967 is modified (phosphoserine). Residue Thr978 is modified to Phosphothreonine. Phosphoserine occurs at positions 991, 998, and 1001. A Phosphotyrosine modification is found at Tyr1004. The region spanning 1079–1346 (VHFNEVIGRG…RISAIFSTFI (268 aa)) is the Protein kinase domain. Residues 1085 to 1093 (IGRGHFGCV) and Lys1111 each bind ATP. Asp1205 (proton acceptor) is an active-site residue. Positions 1213-1381 (LDEKFTVKVA…QDDLDGEVDT (169 aa)) are interaction with RANBP9. Residue Tyr1231 is modified to Phosphotyrosine. Residues Tyr1235 and Tyr1236 each carry the phosphotyrosine; by autocatalysis modification. Phosphothreonine is present on Thr1290. An interaction with MUC20 region spans residues 1321–1360 (WHPKAEMRPSFSELVSRISAIFSTFIGEHYVHVNATYVNV). Phosphotyrosine; by autocatalysis occurs at positions 1350 and 1357. Tyr1366 is modified (phosphotyrosine).

It belongs to the protein kinase superfamily. Tyr protein kinase family. Heterodimer made of an alpha chain (50 kDa) and a beta chain (145 kDa) which are disulfide linked. Binds PLXNB1. Interacts when phosphorylated with downstream effectors including STAT3, PIK3R1, SRC, PCLG1, GRB2 and GAB1. Interacts with SPSB1, SPSB2 and SPSB4. Interacts with INPP5D/SHIP1. When phosphorylated at Tyr-1357, interacts with INPPL1/SHIP2. Interacts with RANBP9 and RANBP10, as well as SPSB1, SPSB2, SPSB3 and SPSB4. SPSB1 binding occurs in the presence and in the absence of HGF, however HGF treatment has a positive effect on this interaction. Interacts with MUC20; prevents interaction with GRB2 and suppresses hepatocyte growth factor-induced cell proliferation. Interacts with GRB10. Interacts with PTPN1 and PTPN2. Interacts with HSP90AA1 and HSP90AB1; the interaction suppresses MET kinase activity. Interacts with tensin TNS3. Interacts (when phosphorylated) with tensin TNS4 (via SH2 domain); the interaction increases MET protein stability by inhibiting MET endocytosis and subsequent lysosomal degradation. In terms of processing, autophosphorylated in response to ligand binding on Tyr-1235 and Tyr-1236 in the kinase domain leading to further phosphorylation of Tyr-1350 and Tyr-1357 in the C-terminal multifunctional docking site. Dephosphorylated by PTPRJ at Tyr-1350 and Tyr-1366. Dephosphorylated by PTPN1 and PTPN2. Ubiquitinated. Ubiquitination by CBL regulates the receptor stability and activity through proteasomal degradation. Post-translationally, O-mannosylation of IPT/TIG domains by TMEM260 is required for protein maturation. O-mannosylated residues are composed of single mannose glycans that are not elongated or modified.

The protein resides in the membrane. It carries out the reaction L-tyrosyl-[protein] + ATP = O-phospho-L-tyrosyl-[protein] + ADP + H(+). With respect to regulation, in its inactive state, the C-terminal tail interacts with the catalytic domain and inhibits the kinase activity. Upon ligand binding, the C-terminal tail is displaced and becomes phosphorylated, thus increasing the kinase activity. In terms of biological role, receptor tyrosine kinase that transduces signals from the extracellular matrix into the cytoplasm by binding to hepatocyte growth factor/HGF ligand. Regulates many physiological processes including proliferation, scattering, morphogenesis and survival. Ligand binding at the cell surface induces autophosphorylation of MET on its intracellular domain that provides docking sites for downstream signaling molecules. Following activation by ligand, interacts with the PI3-kinase subunit PIK3R1, PLCG1, SRC, GRB2, STAT3 or the adapter GAB1. Recruitment of these downstream effectors by MET leads to the activation of several signaling cascades including the RAS-ERK, PI3 kinase-AKT, or PLCgamma-PKC. The RAS-ERK activation is associated with the morphogenetic effects while PI3K/AKT coordinates prosurvival effects. During embryonic development, MET signaling plays a role in gastrulation, development and migration of muscles and neuronal precursors, angiogenesis and kidney formation. In adults, participates in wound healing as well as organ regeneration and tissue remodeling. Also promotes differentiation and proliferation of hematopoietic cells. The sequence is that of Hepatocyte growth factor receptor (MET) from Dasypus novemcinctus (Nine-banded armadillo).